We begin with the raw amino-acid sequence, 134 residues long: MTIRPAYRPKIVKKRTKHFIRHQSDRYAKLSHKWRKPKGIDNRVRRRFKGQYLMPNIGYGSNKRTRHMLPTGFKKFLVHNVRELEVLLMQNRVYCGEIAHGVSSKKRKEIVERAKQLSVRLTNPNGRLRSQENE.

It belongs to the eukaryotic ribosomal protein eL32 family.

This is Large ribosomal subunit protein eL32 (RpL32) from Drosophila melanogaster (Fruit fly).